The following is a 285-amino-acid chain: Probable endonuclease 4 (285 aa).

Residues His69, His109, Glu145, Asp179, His182, His216, Asp229, His231, and Glu261 each contribute to the Zn(2+) site.

It belongs to the AP endonuclease 2 family. The cofactor is Zn(2+).

The catalysed reaction is Endonucleolytic cleavage to 5'-phosphooligonucleotide end-products.. Endonuclease IV plays a role in DNA repair. It cleaves phosphodiester bonds at apurinic or apyrimidinic (AP) sites, generating a 3'-hydroxyl group and a 5'-terminal sugar phosphate. The chain is Probable endonuclease 4 from Yersinia pseudotuberculosis serotype O:1b (strain IP 31758).